The chain runs to 217 residues: ATP-dependent Clp protease proteolytic subunit 2 (217 aa).

The active-site Nucleophile is the S121. H146 is an active-site residue.

This sequence belongs to the peptidase S14 family. In terms of assembly, fourteen ClpP subunits assemble into 2 heptameric rings which stack back to back to give a disk-like structure with a central cavity, resembling the structure of eukaryotic proteasomes.

The protein localises to the cytoplasm. It catalyses the reaction Hydrolysis of proteins to small peptides in the presence of ATP and magnesium. alpha-casein is the usual test substrate. In the absence of ATP, only oligopeptides shorter than five residues are hydrolyzed (such as succinyl-Leu-Tyr-|-NHMec, and Leu-Tyr-Leu-|-Tyr-Trp, in which cleavage of the -Tyr-|-Leu- and -Tyr-|-Trp bonds also occurs).. In terms of biological role, cleaves peptides in various proteins in a process that requires ATP hydrolysis. Has a chymotrypsin-like activity. Plays a major role in the degradation of misfolded proteins. The chain is ATP-dependent Clp protease proteolytic subunit 2 from Paraburkholderia xenovorans (strain LB400).